We begin with the raw amino-acid sequence, 199 residues long: NAD(P)H dehydrogenase (quinone) (199 aa).

In terms of domain architecture, Flavodoxin-like spans 4–190; sequence VLVLYYSTYG…DGARYQGRHV (187 aa). FMN is bound by residues 10–15 and 78–80; these read STYGHI and TRY. Y12 is an NAD(+) binding site. Residue W98 coordinates substrate. FMN contacts are provided by residues 113-119 and H134; that span reads SSASQHG.

The protein belongs to the WrbA family. It depends on FMN as a cofactor.

The enzyme catalyses a quinone + NADH + H(+) = a quinol + NAD(+). The catalysed reaction is a quinone + NADPH + H(+) = a quinol + NADP(+). The chain is NAD(P)H dehydrogenase (quinone) from Methylobacterium sp. (strain 4-46).